A 411-amino-acid chain; its full sequence is G2/mitotic-specific cyclin cig2 (411 aa).

A Destruction box motif is present at residues 51–60 (RTVLSDVSNV). The interval 57–89 (VSNVGKNNADEKDTKKAKRSFDESNLSTNEEAD) is disordered. Basic and acidic residues predominate over residues 64 to 78 (NADEKDTKKAKRSFD). One can recognise a Cyclin N-terminal domain in the interval 139–265 (EIFEYIRKLD…MLNVLNFDLS (127 aa)). Residues 181–273 (SNFCLMPETL…LSYPSPLNFL (93 aa)) form an interaction with pop1 region.

Belongs to the cyclin family. Cyclin AB subfamily. As to quaternary structure, associates with cdc2, res2 and rum1. Interacts with pop1 only when phosphorylated. Post-translationally, phosphorylated.

Its subcellular location is the nucleus. It is found in the cytoplasm. The protein resides in the cytoskeleton. The protein localises to the microtubule organizing center. It localises to the spindle pole body. Functionally, essential for the control of the cell cycle at the G2/M and G1/S (mitosis) transition. Interacts with the cdc2 protein kinase to form MPF. Interaction with res2 promotes the phosphorylation of res1 and inhibits MBF-dependent gene transcription. Forms an autoregulating feedback-inhibition loop with MBF which is important for normal regulation of the cell cycle. G2/M cyclins accumulate steadily during G2 and are abruptly destroyed at mitosis. Negatively regulates conjugation via interacting with cell cycle 'start' genes. Degraded by skp1, pop1 and pop2 in the G2 and M phases of the cell cycle. This chain is G2/mitotic-specific cyclin cig2 (cig2), found in Schizosaccharomyces pombe (strain 972 / ATCC 24843) (Fission yeast).